A 244-amino-acid polypeptide reads, in one-letter code: Cobalt transport protein CbiM (244 aa).

The first 27 residues, 1–27, serve as a signal peptide directing secretion; it reads MVEGMLKTNFRLLFLLIFLLIPTPVLA. The next 6 membrane-spanning stretches (helical) occupy residues 36 to 56, 65 to 85, 102 to 122, 134 to 154, 168 to 188, and 196 to 216; these read PVKW…VGFI, GPGA…LSAL, LAAI…VLIF, TLGA…YGVY, IFLA…VQLA, and LFLS…PLAI.

The protein belongs to the CbiM family. Forms an energy-coupling factor (ECF) transporter complex composed of an ATP-binding protein (A component, CbiO), a transmembrane protein (T component, CbiQ) and 2 possible substrate-capture proteins (S components, CbiM and CbiN) of unknown stoichimetry.

The protein resides in the cell membrane. Its pathway is cofactor biosynthesis; adenosylcobalamin biosynthesis. Functionally, part of the energy-coupling factor (ECF) transporter complex CbiMNOQ involved in cobalt import. This is Cobalt transport protein CbiM from Carboxydothermus hydrogenoformans (strain ATCC BAA-161 / DSM 6008 / Z-2901).